Consider the following 795-residue polypeptide: Glycerol-3-phosphate acyltransferase 2, mitochondrial (795 aa).

A disordered region spans residues 1-21; that stretch reads MATMLEGRCQTQPRSSPSGRE. Topologically, residues 1-305 are cytoplasmic; it reads MATMLEGRCQ…LGPRLSALGQ (305 aa). The segment covering 9–18 has biased composition (polar residues); the sequence is CQTQPRSSPS. The tract at residues 180-331 is acyltransferase; the sequence is QLHKGQMKMV…DALLVPVAVT (152 aa). The HXXXXD motif motif lies at 205–210; that stretch reads HKTLLD. A helical membrane pass occupies residues 306 to 332; sequence AWVGFVVQAVQVGIVPDALLVPVAVTY. The Mitochondrial intermembrane portion of the chain corresponds to 333-449; the sequence is DLVPDAPCDI…QLLVRRLSCH (117 aa). Residues 450 to 472 form a helical membrane-spanning segment; that stretch reads VLSASVGSSAVMSTAIMATLLLF. The Cytoplasmic segment spans residues 473–795; the sequence is KHQKLLGEFS…EQFIRQFICS (323 aa). Ser-656 bears the Phosphoserine mark. Phosphothreonine is present on Thr-660. Phosphoserine occurs at positions 662 and 664.

The protein belongs to the GPAT/DAPAT family. Interacts with PIWIL2.

The protein localises to the mitochondrion outer membrane. The enzyme catalyses sn-glycerol 3-phosphate + an acyl-CoA = a 1-acyl-sn-glycero-3-phosphate + CoA. It carries out the reaction a 1-acyl-sn-glycero-3-phosphate + an acyl-CoA = a 1,2-diacyl-sn-glycero-3-phosphate + CoA. It catalyses the reaction 1-(9Z-octadecenoyl)-sn-glycero-3-phosphate + (9Z)-octadecenoyl-CoA = 1,2-di-(9Z-octadecenoyl)-sn-glycero-3-phosphate + CoA. The catalysed reaction is 1-(9Z-octadecenoyl)-sn-glycero-3-phosphate + (5Z,8Z,11Z,14Z)-eicosatetraenoyl-CoA = 1-(9Z)-octadecenoyl-2-(5Z,8Z,11Z,14Z)-eicosatetraenoyl-sn-glycero-3-phosphate + CoA. The enzyme catalyses (5Z,8Z,11Z,14Z)-eicosatetraenoyl-CoA + sn-glycerol 3-phosphate = 1-(5Z,8Z,11Z,14Z-eicosatetraenoyl)-sn-glycero-3-phosphate + CoA. It functions in the pathway phospholipid metabolism; CDP-diacylglycerol biosynthesis; CDP-diacylglycerol from sn-glycerol 3-phosphate: step 1/3. Its activity is regulated as follows. Inhibited by N-ethylmaleimide (NEM). Functionally, transfers an acyl-group from acyl-ACP to the sn-1 position of glycerol-3-phosphate producing a lysophosphatidic acid (LPA), an essential step for the triacylglycerol (TAG) and glycerophospholipids. In vitro also transfers an acyl-group from acyl-ACP to the LPA producing a phosphatidic acid (PA). Prefers arachidonoyl-CoA as the acyl donor. Required for primary processing step during piRNA biosynthesis. Molecular mechanisms by which it promotes piRNA biosynthesis are unclear and do not involve its acyltransferase activity. This chain is Glycerol-3-phosphate acyltransferase 2, mitochondrial, found in Homo sapiens (Human).